The following is a 362-amino-acid chain: MTMRIFNFSPGPATLPEPVLRQAQAEMLEWNAVGASVMEISHRSAEFIALAKGIESDLRCLLGVPDDYAVLFLSGGATTQQALLPLNFAAPGQTADYVVTGHWSKTALKQASPYVNINVVADGERDGFQDIPNRAGWRLSKDAAYVHMTANETIHGVEFRQTPDVGDVPLFADFSSSIAADLIDVSKYDLIYAGAQKNLGPVGICVVIVRRTLLERTGQPRADIFTYASHAERDSMLNTPPTFNWYLLGLTVKWMLAEGGVQEFARRNQAKAQLVYQTIDQSGGFYRNGVAAAVRSRMNIPFFLPNVEQDARFAAEAKAAGLLSLKGHKAVGGIRASLYNAMPLAGVQALVAFMHDFQQRYG.

Residue R43 participates in L-glutamate binding. Residues 77 to 78 (AT), W103, T153, D173, and Q196 each bind pyridoxal 5'-phosphate. K197 is subject to N6-(pyridoxal phosphate)lysine. Pyridoxal 5'-phosphate is bound at residue 238 to 239 (NT).

This sequence belongs to the class-V pyridoxal-phosphate-dependent aminotransferase family. SerC subfamily. As to quaternary structure, homodimer. Pyridoxal 5'-phosphate serves as cofactor.

The protein localises to the cytoplasm. The enzyme catalyses O-phospho-L-serine + 2-oxoglutarate = 3-phosphooxypyruvate + L-glutamate. It carries out the reaction 4-(phosphooxy)-L-threonine + 2-oxoglutarate = (R)-3-hydroxy-2-oxo-4-phosphooxybutanoate + L-glutamate. It functions in the pathway amino-acid biosynthesis; L-serine biosynthesis; L-serine from 3-phospho-D-glycerate: step 2/3. Its pathway is cofactor biosynthesis; pyridoxine 5'-phosphate biosynthesis; pyridoxine 5'-phosphate from D-erythrose 4-phosphate: step 3/5. In terms of biological role, catalyzes the reversible conversion of 3-phosphohydroxypyruvate to phosphoserine and of 3-hydroxy-2-oxo-4-phosphonooxybutanoate to phosphohydroxythreonine. This chain is Phosphoserine aminotransferase, found in Xylella fastidiosa (strain Temecula1 / ATCC 700964).